Here is a 309-residue protein sequence, read N- to C-terminus: Porphobilinogen deaminase (309 aa).

At C242 the chain carries S-(dipyrrolylmethanemethyl)cysteine.

It belongs to the HMBS family. Monomer. Dipyrromethane serves as cofactor.

It catalyses the reaction 4 porphobilinogen + H2O = hydroxymethylbilane + 4 NH4(+). It functions in the pathway porphyrin-containing compound metabolism; protoporphyrin-IX biosynthesis; coproporphyrinogen-III from 5-aminolevulinate: step 2/4. In terms of biological role, tetrapolymerization of the monopyrrole PBG into the hydroxymethylbilane pre-uroporphyrinogen in several discrete steps. The chain is Porphobilinogen deaminase from Syntrophobacter fumaroxidans (strain DSM 10017 / MPOB).